Consider the following 242-residue polypeptide: Cytochrome c oxidase subunit 2 (242 aa).

The Mitochondrial intermembrane segment spans residues 7 to 33 (DVPVPYGLYFQDSATPTFDGIIELHDI). The helical transmembrane segment at 34 to 55 (VMFYIVVTIVLVSYLLFVIIKN) threads the bilayer. Topologically, residues 56 to 73 (FSNDHISYKYLTHGTTLE) are mitochondrial matrix. A helical membrane pass occupies residues 74–98 (IVWTIFPVVILLFIAFPSFILLYLC). Residues 99-242 (DEVIDPAMTI…DKFLSWLDEQ (144 aa)) are Mitochondrial intermembrane-facing. Residues His-177, Cys-212, Glu-214, Cys-216, His-220, and Met-223 each contribute to the Cu cation site. Glu-214 is a binding site for Mg(2+).

This sequence belongs to the cytochrome c oxidase subunit 2 family. As to quaternary structure, component of the cytochrome c oxidase (complex IV, CIV), a multisubunit enzyme composed of a catalytic core of 3 subunits and several supernumerary subunits. The complex exists as a monomer or a dimer and forms supercomplexes (SCs) in the inner mitochondrial membrane with ubiquinol-cytochrome c oxidoreductase (cytochrome b-c1 complex, complex III, CIII). Cu cation serves as cofactor. In terms of processing, the signal sequence of COX2 is processed by IMP1.

It is found in the mitochondrion inner membrane. It catalyses the reaction 4 Fe(II)-[cytochrome c] + O2 + 8 H(+)(in) = 4 Fe(III)-[cytochrome c] + 2 H2O + 4 H(+)(out). Component of the cytochrome c oxidase, the last enzyme in the mitochondrial electron transport chain which drives oxidative phosphorylation. The respiratory chain contains 3 multisubunit complexes succinate dehydrogenase (complex II, CII), ubiquinol-cytochrome c oxidoreductase (cytochrome b-c1 complex, complex III, CIII) and cytochrome c oxidase (complex IV, CIV), that cooperate to transfer electrons derived from NADH and succinate to molecular oxygen, creating an electrochemical gradient over the inner membrane that drives transmembrane transport and the ATP synthase. Cytochrome c oxidase is the component of the respiratory chain that catalyzes the reduction of oxygen to water. Electrons originating from reduced cytochrome c in the intermembrane space (IMS) are transferred via the dinuclear copper A center (CU(A)) of subunit 2 and heme A of subunit 1 to the active site in subunit 1, a binuclear center (BNC) formed by heme A3 and copper B (CU(B)). The BNC reduces molecular oxygen to 2 water molecules using 4 electrons from cytochrome c in the IMS and 4 protons from the mitochondrial matrix. The polypeptide is Cytochrome c oxidase subunit 2 (COX2) (Yarrowia lipolytica (strain CLIB 122 / E 150) (Yeast)).